Consider the following 317-residue polypeptide: 2,3,4,5-tetrahydropyridine-2,6-dicarboxylate N-succinyltransferase (317 aa).

Residues Asp-166 and Glu-183 each contribute to the Mg(2+) site. The active-site Acyl-anhydride intermediate is the Glu-199. Succinyl-CoA contacts are provided by residues Arg-201, Gly-216, Ser-219, Ala-242, 257–258 (EA), Gly-265, Lys-277, and 290–293 (RRNS).

Belongs to the type 2 tetrahydrodipicolinate N-succinyltransferase family. Homotrimer.

The protein localises to the cytoplasm. The catalysed reaction is (S)-2,3,4,5-tetrahydrodipicolinate + succinyl-CoA + H2O = (S)-2-succinylamino-6-oxoheptanedioate + CoA. Its pathway is amino-acid biosynthesis; L-lysine biosynthesis via DAP pathway; LL-2,6-diaminopimelate from (S)-tetrahydrodipicolinate (succinylase route): step 1/3. Its function is as follows. Catalyzes the conversion of the cyclic tetrahydrodipicolinate (THDP) into the acyclic N-succinyl-L-2-amino-6-oxopimelate using succinyl-CoA. The sequence is that of 2,3,4,5-tetrahydropyridine-2,6-dicarboxylate N-succinyltransferase (dapD) from Mycobacterium tuberculosis (strain CDC 1551 / Oshkosh).